We begin with the raw amino-acid sequence, 526 residues long: 3',5'-cyclic-nucleotide phosphodiesterase 2 (526 aa).

A PDEase domain is found at 182–526 (RNIEFMSFLS…EYWMKHKKPQ (345 aa)). The active-site Proton donor is His265. A divalent metal cation is bound by residues His269, His302, Asp303, and Asp400.

This sequence belongs to the cyclic nucleotide phosphodiesterase family. Monomer. A divalent metal cation is required as a cofactor.

It carries out the reaction 3',5'-cyclic AMP + H2O = AMP + H(+). Controls the level of cAMP in yeast cells, together with the low-affinity cAMP phosphodiesterase (PDE1). The sequence is that of 3',5'-cyclic-nucleotide phosphodiesterase 2 from Saccharomyces cerevisiae (strain ATCC 204508 / S288c) (Baker's yeast).